The chain runs to 185 residues: Peptidyl-tRNA hydrolase (185 aa).

Tyr-14 contributes to the tRNA binding site. His-19 functions as the Proton acceptor in the catalytic mechanism. The tRNA site is built by Tyr-65, Asn-67, and Asn-113.

It belongs to the PTH family. As to quaternary structure, monomer.

The protein resides in the cytoplasm. The enzyme catalyses an N-acyl-L-alpha-aminoacyl-tRNA + H2O = an N-acyl-L-amino acid + a tRNA + H(+). Hydrolyzes ribosome-free peptidyl-tRNAs (with 1 or more amino acids incorporated), which drop off the ribosome during protein synthesis, or as a result of ribosome stalling. Functionally, catalyzes the release of premature peptidyl moieties from peptidyl-tRNA molecules trapped in stalled 50S ribosomal subunits, and thus maintains levels of free tRNAs and 50S ribosomes. The chain is Peptidyl-tRNA hydrolase from Rickettsia canadensis (strain McKiel).